The chain runs to 450 residues: tRNA-2-methylthio-N(6)-dimethylallyladenosine synthase (450 aa).

One can recognise an MTTase N-terminal domain in the interval 2–119 (KKVFVKTYGC…LPDLIARRQR (118 aa)). [4Fe-4S] cluster contacts are provided by Cys11, Cys48, Cys82, Cys156, Cys160, and Cys163. In terms of domain architecture, Radical SAM core spans 142–375 (RVEGPSAFVS…QATIEENVQR (234 aa)). The region spanning 378 to 448 (QNMVGTVQRI…PHSLRGEIVV (71 aa)) is the TRAM domain.

Belongs to the methylthiotransferase family. MiaB subfamily. As to quaternary structure, monomer. It depends on [4Fe-4S] cluster as a cofactor.

Its subcellular location is the cytoplasm. The catalysed reaction is N(6)-dimethylallyladenosine(37) in tRNA + (sulfur carrier)-SH + AH2 + 2 S-adenosyl-L-methionine = 2-methylsulfanyl-N(6)-dimethylallyladenosine(37) in tRNA + (sulfur carrier)-H + 5'-deoxyadenosine + L-methionine + A + S-adenosyl-L-homocysteine + 2 H(+). Its function is as follows. Catalyzes the methylthiolation of N6-(dimethylallyl)adenosine (i(6)A), leading to the formation of 2-methylthio-N6-(dimethylallyl)adenosine (ms(2)i(6)A) at position 37 in tRNAs that read codons beginning with uridine. This is tRNA-2-methylthio-N(6)-dimethylallyladenosine synthase from Cupriavidus necator (strain ATCC 17699 / DSM 428 / KCTC 22496 / NCIMB 10442 / H16 / Stanier 337) (Ralstonia eutropha).